Consider the following 224-residue polypeptide: uncharacterized protein (224 aa).

The disordered stretch occupies residues 203–224; that stretch reads ELKKKKKKKIKKPKEIRNQKNV. Positions 204–214 are enriched in basic residues; it reads LKKKKKKKIKK. The span at 215–224 shows a compositional bias: basic and acidic residues; that stretch reads PKEIRNQKNV.

This is an uncharacterized protein from Mycoplasma genitalium (strain ATCC 33530 / DSM 19775 / NCTC 10195 / G37) (Mycoplasmoides genitalium).